We begin with the raw amino-acid sequence, 343 residues long: Fructose-bisphosphate aldolase (343 aa).

Residue Ser53 coordinates D-glyceraldehyde 3-phosphate. The active-site Proton donor is Asp95. Zn(2+) contacts are provided by His96, Asp131, Glu161, and His212. Position 213 (Gly213) interacts with dihydroxyacetone phosphate. His252 lines the Zn(2+) pocket. Dihydroxyacetone phosphate-binding positions include 253–255 (GGS) and 274–277 (NIDT).

The protein belongs to the class II fructose-bisphosphate aldolase family. Zn(2+) serves as cofactor.

The catalysed reaction is beta-D-fructose 1,6-bisphosphate = D-glyceraldehyde 3-phosphate + dihydroxyacetone phosphate. It functions in the pathway carbohydrate degradation; glycolysis; D-glyceraldehyde 3-phosphate and glycerone phosphate from D-glucose: step 4/4. Its function is as follows. Catalyzes the aldol condensation of dihydroxyacetone phosphate (DHAP or glycerone-phosphate) with glyceraldehyde 3-phosphate (G3P) to form fructose 1,6-bisphosphate (FBP) in gluconeogenesis and the reverse reaction in glycolysis. This chain is Fructose-bisphosphate aldolase (fba), found in Streptomyces coelicolor (strain ATCC BAA-471 / A3(2) / M145).